The chain runs to 84 residues: Cysteine-rich protamine (84 aa).

2 cysteine pairs are disulfide-bonded: C16/C24 and C64/C80.

Cross-linked by interchain disulfide bonds around the DNA-helix. As to expression, testis.

It localises to the nucleus. The protein resides in the chromosome. In terms of biological role, protamines substitute for histones in the chromatin of sperm during the haploid phase of spermatogenesis. They compact sperm DNA into a highly condensed, stable and inactive complex. This protamine condenses spermiogenic chromatin in a pattern which comprises fibers with a progressively larger diameter and lamellae that finally undergo definitive coalescence. The sequence is that of Cysteine-rich protamine from Eledone cirrhosa (Curled octopus).